The chain runs to 237 residues: tRNA1(Val) (adenine(37)-N6)-methyltransferase (237 aa).

This sequence belongs to the methyltransferase superfamily. tRNA (adenine-N(6)-)-methyltransferase family.

It localises to the cytoplasm. The catalysed reaction is adenosine(37) in tRNA1(Val) + S-adenosyl-L-methionine = N(6)-methyladenosine(37) in tRNA1(Val) + S-adenosyl-L-homocysteine + H(+). In terms of biological role, specifically methylates the adenine in position 37 of tRNA(1)(Val) (anticodon cmo5UAC). The sequence is that of tRNA1(Val) (adenine(37)-N6)-methyltransferase from Parabacteroides distasonis (strain ATCC 8503 / DSM 20701 / CIP 104284 / JCM 5825 / NCTC 11152).